Consider the following 401-residue polypeptide: Multidrug resistance protein MdtH (401 aa).

The next 11 membrane-spanning stretches (helical) occupy residues 13 to 33, 34 to 54, 99 to 116, 139 to 159, 165 to 185, 214 to 234, 243 to 263, 277 to 297, 299 to 319, 340 to 360, and 368 to 388; these read YFLLFDNLLVVLGFFVVFPLI, SIRFVDQLGWAALVVGLALGL, PWILWLACALSGLGGTLF, LLMMQDSAGAVIGALIGSWLL, FVCWTGAAIFVLAAGWNAWLL, VLTLTGYYMLAVQVMLMLPIV, AAVKWMYAIEAALSLTLLYPL, LMAGLLIMTLSLFPIGMITHL, TLFMFICFFYMGSILAEPARE, LGLALGGALGYTGGGWMYDTG, and LPWFLLGIIGLITLAGLYWQF.

Belongs to the major facilitator superfamily. DHA1 family. MdtH (TC 2.A.1.2.21) subfamily.

The protein resides in the cell inner membrane. This chain is Multidrug resistance protein MdtH, found in Yersinia pseudotuberculosis serotype O:1b (strain IP 31758).